A 213-amino-acid polypeptide reads, in one-letter code: Transcription antitermination protein NusB (213 aa).

The protein belongs to the NusB family.

Its function is as follows. Involved in transcription antitermination. Required for transcription of ribosomal RNA (rRNA) genes. Binds specifically to the boxA antiterminator sequence of the ribosomal RNA (rrn) operons. The sequence is that of Transcription antitermination protein NusB from Synechococcus elongatus (strain ATCC 33912 / PCC 7942 / FACHB-805) (Anacystis nidulans R2).